We begin with the raw amino-acid sequence, 850 residues long: Response regulator sskA (850 aa).

Disordered regions lie at residues 1–225 (MPDR…GASS) and 419–542 (IPQR…GQSP). The segment covering 7–25 (SQLLKSKLLRRSSTTATTS) has biased composition (low complexity). Positions 117 to 138 (GANSRQEGSQNGSIQQSPTFTR) are enriched in polar residues. Residues 144–163 (QLTEEKDKGKLQSREGDQRG) show a composition bias toward basic and acidic residues. Over residues 177 to 196 (SDPQYSLTTELANKPSTPQT) the composition is skewed to polar residues. The segment covering 436 to 445 (HHSEPGEHGE) has biased composition (basic and acidic residues). Residues 477 to 490 (PSISILTTDSNMAS) are compositionally biased toward polar residues. Residues 492-511 (PQPPVAAPQVPTPPGPPPES) are compositionally biased toward pro residues. The region spanning 558–719 (NVLIVEDNII…WLEQKVTEWG (162 aa)) is the Response regulatory domain. D607 is subject to 4-aspartylphosphate. A disordered region spans residues 736-850 (FADEPQSSSP…DEEQQALDAT (115 aa)). Low complexity predominate over residues 762 to 782 (SSRTSTSPSSAAVNATARAFA). The span at 819-828 (TLDSPASPLT) shows a compositional bias: polar residues. Acidic residues predominate over residues 839–850 (PGDEEQQALDAT).

Belongs to the SSK1 family.

The protein resides in the cytoplasm. Its function is as follows. Final receptor of the osmolarity two-component system regulatory system, which controls activity of the sakA mitogen-activated protein kinase (MAPK) pathway in response to changes in the osmolarity of the extracellular environment. Regulates the germination in the airways that drives enhanced disease initiation and inflammation in the lungs. The protein is Response regulator sskA of Aspergillus fumigatus (strain ATCC MYA-4609 / CBS 101355 / FGSC A1100 / Af293) (Neosartorya fumigata).